The primary structure comprises 528 residues: Adhesion G-protein coupled receptor G5 (528 aa).

The signal sequence occupies residues 1–21 (MDHCGALFLCLCLLTLQNATT). The Extracellular segment spans residues 22–245 (ETWEELLSYM…SPALVPAELL (224 aa)). 6 N-linked (GlcNAc...) asparagine glycosylation sites follow: Asn58, Asn65, Asn146, Asn147, Asn173, and Asn179. Positions 78-239 (FKLSCDFSGL…AVLMQLSPAL (162 aa)) constitute a GAIN-B domain. 2 disulfide bridges follow: Cys189–Cys221 and Cys209–Cys223. Residues 189–239 (CVFWKEGARKQPWGGWSPEGCRTEQPSHSQVLCRCNHLTYFAVLMQLSPAL) are GPS. The interval 228–236 (YFAVLMQLS) is stachel. Residues 246–271 (APLTYISLVGCSISIVASLITVLLHF) traverse the membrane as a helical segment. Residues 272–280 (HFRKQSDSL) are Cytoplasmic-facing. A helical membrane pass occupies residues 281–304 (TRIHMNLHASVLLLNIAFLLSPAF). At 305 to 314 (AMSPVPGSAC) the chain is on the extracellular side. An intrachain disulfide couples Cys314 to Cys404. The helical transmembrane segment at 315 to 340 (TALAAALHYALLSCLTWMAIEGFNLY) threads the bilayer. Topologically, residues 341 to 353 (LLLGRVYNIYIRR) are cytoplasmic. A helical membrane pass occupies residues 354–377 (YVFKLGVLGWGAPALLVLLSLSVK). The Extracellular portion of the chain corresponds to 378 to 410 (SSVYGPCTIPVFDSWENGTGFQNMSICWVRSPV). Residues Asn394 and Asn400 are each glycosylated (N-linked (GlcNAc...) asparagine). Residues 411–435 (VHSVLVMGYGGLTSLFNLVVLAWAL) form a helical membrane-spanning segment. At 436–455 (WTLRRLRERADAPSVRACHD) the chain is on the cytoplasmic side. The chain crosses the membrane as a helical span at residues 456–477 (TVTVLGLTVLLGTTWALAFFSF). Topologically, residues 478–481 (GVFL) are extracellular. The helical transmembrane segment at 482–505 (LPQLFLFTILNSLYGFFLFLWFCS) threads the bilayer. Topologically, residues 506-528 (QRCRSEAEAKAQIEAFSSSQTTQ) are cytoplasmic.

The protein belongs to the G-protein coupled receptor 2 family. Adhesion G-protein coupled receptor (ADGR) subfamily. In terms of assembly, heterodimer of 2 chains generated by proteolytic processing; the large extracellular N-terminal fragment and the membrane-bound C-terminal fragment predominantly remain associated and non-covalently linked. In terms of processing, autoproteolytically processed at the GPS region of the GAIN-B domain; this cleavage modulates receptor activity. N-glycsylated. Expressed in immune cells. Primarily found in granulocytes. Found in eosinophils.

The protein resides in the cell membrane. Forms a heterodimer of 2 chains generated by proteolytic processing that remain associated through non-covalent interactions mediated by the GAIN-B domain. In the inactivated receptor, the Stachel sequence (also named stalk) is embedded in the GAIN-B domain, where it adopts a beta-strand conformation. On activation, the Stachel moves into the 7 transmembrane region and adopts a twisted hook-shaped configuration that forms contacts within the receptor, leading to coupling of a G-alpha protein, which activates signaling. The cleaved GAIN-B and N-terminal domains can then dissociate from the rest of the receptor. Orphan adhesion G-protein coupled receptor (aGPCR). Ligand binding causes a conformation change that triggers signaling via guanine nucleotide-binding proteins (G proteins) and modulates the activity of downstream effectors, such as adenylate cyclase. ADGRG5 is specifically coupled to G(s) G proteins and mediates activation of adenylate cyclase activity. This chain is Adhesion G-protein coupled receptor G5, found in Homo sapiens (Human).